The chain runs to 231 residues: Ribose-5-phosphate isomerase A (231 aa).

Substrate-binding positions include 32–35, 85–88, and 98–101; these read TGST, DGAD, and KGGG. Glu107 acts as the Proton acceptor in catalysis. A substrate-binding site is contributed by Lys125.

This sequence belongs to the ribose 5-phosphate isomerase family. Homodimer.

It carries out the reaction aldehydo-D-ribose 5-phosphate = D-ribulose 5-phosphate. The protein operates within carbohydrate degradation; pentose phosphate pathway; D-ribose 5-phosphate from D-ribulose 5-phosphate (non-oxidative stage): step 1/1. Catalyzes the reversible conversion of ribose-5-phosphate to ribulose 5-phosphate. This chain is Ribose-5-phosphate isomerase A, found in Paraburkholderia phytofirmans (strain DSM 17436 / LMG 22146 / PsJN) (Burkholderia phytofirmans).